A 315-amino-acid polypeptide reads, in one-letter code: 4-diphosphocytidyl-2-C-methyl-D-erythritol kinase (315 aa).

Residue K8 is part of the active site. 93–103 provides a ligand contact to ATP; sequence PVAAGLAGGSS. D135 is an active-site residue.

Belongs to the GHMP kinase family. IspE subfamily.

It carries out the reaction 4-CDP-2-C-methyl-D-erythritol + ATP = 4-CDP-2-C-methyl-D-erythritol 2-phosphate + ADP + H(+). Its pathway is isoprenoid biosynthesis; isopentenyl diphosphate biosynthesis via DXP pathway; isopentenyl diphosphate from 1-deoxy-D-xylulose 5-phosphate: step 3/6. Functionally, catalyzes the phosphorylation of the position 2 hydroxy group of 4-diphosphocytidyl-2C-methyl-D-erythritol. The chain is 4-diphosphocytidyl-2-C-methyl-D-erythritol kinase from Heliobacterium modesticaldum (strain ATCC 51547 / Ice1).